The chain runs to 173 residues: C-phycocyanin-3 beta subunit (173 aa).

N4-methylasparagine is present on N73. The (2R,3E)-phycocyanobilin site is built by C83 and C154.

This sequence belongs to the phycobiliprotein family. As to quaternary structure, heterodimer of an alpha and a beta subunit, which further assembles into trimers and the trimers into hexamers. In terms of processing, contains two covalently linked bilin chromophores.

It is found in the cellular thylakoid membrane. In terms of biological role, light-harvesting photosynthetic bile pigment-protein from the phycobiliprotein complex (phycobilisome, PBS). Phycocyanin is the major phycobiliprotein in the PBS rod. The chain is C-phycocyanin-3 beta subunit (cpcB3) from Microchaete diplosiphon (Fremyella diplosiphon).